The sequence spans 569 residues: AA9 family lytic polysaccharide monooxygenase A (569 aa).

The N-terminal stretch at 1 to 16 (MRIFSLALGFLPLVAG) is a signal peptide. Cu(2+) contacts are provided by histidine 17 and histidine 99. Cysteine 59 and cysteine 189 are joined by a disulfide. N-linked (GlcNAc...) asparagine glycosylation is present at asparagine 112. The O2 site is built by histidine 174 and glutamine 184. A Cu(2+)-binding site is contributed by tyrosine 186. N-linked (GlcNAc...) asparagine glycosylation is found at asparagine 244 and asparagine 381. Residues 399 to 424 (AADATATATATTEDAEATTAAEAAAT) show a composition bias toward low complexity. A disordered region spans residues 399 to 439 (AADATATATATTEDAEATTAAEAAATSGAGRPGRGHGHGRG). The N-linked (GlcNAc...) asparagine glycan is linked to asparagine 472.

This sequence belongs to the polysaccharide monooxygenase AA9 family. The cofactor is Cu(2+).

It localises to the secreted. The enzyme catalyses [(1-&gt;4)-beta-D-glucosyl]n+m + reduced acceptor + O2 = 4-dehydro-beta-D-glucosyl-[(1-&gt;4)-beta-D-glucosyl]n-1 + [(1-&gt;4)-beta-D-glucosyl]m + acceptor + H2O.. Its function is as follows. Lytic polysaccharide monooxygenase (LPMO) that depolymerizes crystalline and amorphous polysaccharides via the oxidation of scissile alpha- or beta-(1-4)-glycosidic bonds, yielding C4 oxidation products. Catalysis by LPMOs requires the reduction of the active-site copper from Cu(II) to Cu(I) by a reducing agent and H(2)O(2) or O(2) as a cosubstrate. This Emericella nidulans (strain FGSC A4 / ATCC 38163 / CBS 112.46 / NRRL 194 / M139) (Aspergillus nidulans) protein is AA9 family lytic polysaccharide monooxygenase A.